Reading from the N-terminus, the 130-residue chain is Small ribosomal subunit protein uS9 (130 aa).

Residues 106 to 130 (RDSRKVERKKPGLKKARKASQFSKR) are disordered. Positions 111–130 (VERKKPGLKKARKASQFSKR) are enriched in basic residues.

This sequence belongs to the universal ribosomal protein uS9 family.

The sequence is that of Small ribosomal subunit protein uS9 from Streptococcus pneumoniae (strain ATCC 700669 / Spain 23F-1).